The primary structure comprises 571 residues: Putative diflavin flavoprotein A 1 (571 aa).

The zinc metallo-hydrolase stretch occupies residues 43–236 (ENGTTYNSFL…PPVQLVATGH (194 aa)). Residues H92, E94, D96, H159, D178, and H236 each contribute to the Fe cation site. A Flavodoxin-like domain is found at 265-426 (VAIFYAANYG…DLDKALGRLS (162 aa)). The tract at residues 427–571 (GGLYIITAQK…VHHRKVGNHY (145 aa)) is flavodoxin-reductase-like.

In the N-terminal section; belongs to the zinc metallo-hydrolase group 3 family. This sequence in the C-terminal section; belongs to the flavodoxin reductase family. Fe cation is required as a cofactor.

Mediates electron transfer from NADH to oxygen, reducing it to water. This modular protein has 3 redox cofactors, in other organisms the same activity requires 2 or 3 proteins. The protein is Putative diflavin flavoprotein A 1 (dfa1) of Thermosynechococcus vestitus (strain NIES-2133 / IAM M-273 / BP-1).